A 352-amino-acid polypeptide reads, in one-letter code: UPF0324 membrane protein RA0957 (352 aa).

The next 10 helical transmembrane spans lie at 24 to 43 (VVSYFPGLAVAVLIAISAQF), 48 to 67 (YGAPATLMALLLGMSLNFLS), 104 to 126 (LGVSLLCLVTTALACTILFAIIV), 136 to 158 (LSLLTGGAVAICGASAAVALNAV), 169 to 191 (LALTIVAITLLSTSAMVLYPVLA), 201 to 223 (SGVFIGGTIHDVAQVVGAGFAMS), 235 to 257 (IVRVSLLAPTIIAVLIMVTVLGA), 272 to 294 (GFVLGFAFLAALKSMGFLPAAAG), 301 to 318 (SRWLLLIALGAVGLKTSV), and 328 to 350 (HVTLALLATAFLAAFIVVGLLWY).

It belongs to the UPF0324 family.

The protein localises to the cell membrane. In Rhizobium meliloti (strain 1021) (Ensifer meliloti), this protein is UPF0324 membrane protein RA0957.